A 483-amino-acid polypeptide reads, in one-letter code: Uroporphyrinogen-III C-methyltransferase (483 aa).

Belongs to the precorrin methyltransferase family.

The enzyme catalyses uroporphyrinogen III + 2 S-adenosyl-L-methionine = precorrin-2 + 2 S-adenosyl-L-homocysteine + H(+). The polypeptide is Uroporphyrinogen-III C-methyltransferase (nasF) (Bacillus subtilis (strain 168)).